The following is a 219-amino-acid chain: MTQDEQKRAVAQAALQYVPTGEIIGIGTGSTANLFIDELAKIKHRIEGAVASSEVTANRLKQHGIEVLDLNSVGELPVYIDGADEITRNMHMIKGGGGALTREKIVAAVARKFICIADQSKLVKVLGKFPLPVEVIPMARSYVAREITLLGGQPAWRQGFTTDNGNIILDVHNLNIMNPVELETALNQIAGVVTNGLFARRAANVLLMGTDQGVETITV.

Substrate is bound by residues 28–31, 81–84, and 94–97; these read TGST, DGAD, and KGGG. Glu103 serves as the catalytic Proton acceptor. Lys121 provides a ligand contact to substrate.

The protein belongs to the ribose 5-phosphate isomerase family. In terms of assembly, homodimer.

The catalysed reaction is aldehydo-D-ribose 5-phosphate = D-ribulose 5-phosphate. It participates in carbohydrate degradation; pentose phosphate pathway; D-ribose 5-phosphate from D-ribulose 5-phosphate (non-oxidative stage): step 1/1. Catalyzes the reversible conversion of ribose-5-phosphate to ribulose 5-phosphate. The polypeptide is Ribose-5-phosphate isomerase A (Nitrosomonas europaea (strain ATCC 19718 / CIP 103999 / KCTC 2705 / NBRC 14298)).